The primary structure comprises 194 residues: MRTATKTRVTAETSIELSINLDSQVESTISTGVGFLDHMLTLFAKHSRVTLNVKADGDTYVDAHHTVEDIGITLGLCLKEALADKASINRYGSAYVPMDESLGFCALDLSGRSYLVFDAELTNPKLGDFDTELVEEFFQAVAFNTEMNLHLRVLYGKNTHHKIEALFKAFGRALREAITINPEIKGVNSTKGVL.

It belongs to the imidazoleglycerol-phosphate dehydratase family.

Its subcellular location is the cytoplasm. The enzyme catalyses D-erythro-1-(imidazol-4-yl)glycerol 3-phosphate = 3-(imidazol-4-yl)-2-oxopropyl phosphate + H2O. It participates in amino-acid biosynthesis; L-histidine biosynthesis; L-histidine from 5-phospho-alpha-D-ribose 1-diphosphate: step 6/9. The sequence is that of Imidazoleglycerol-phosphate dehydratase from Listeria monocytogenes serovar 1/2a (strain ATCC BAA-679 / EGD-e).